Here is a 301-residue protein sequence, read N- to C-terminus: Sulfate adenylyltransferase subunit 2 (301 aa).

Residues 278-301 form a disordered region; that stretch reads ERQGRLIDGDEPASMERKKREGYF.

It belongs to the PAPS reductase family. CysD subfamily. As to quaternary structure, sulfate-activating enzymes, NodP and NodQ, may be physically associated.

The catalysed reaction is sulfate + ATP + H(+) = adenosine 5'-phosphosulfate + diphosphate. Proposed to provide activated sulfate for transfer to nod factor. The protein is Sulfate adenylyltransferase subunit 2 (nodP) of Azospirillum brasilense.